A 178-amino-acid polypeptide reads, in one-letter code: Peptide methionine sulfoxide reductase MsrA (178 aa).

Cys14 is a catalytic residue.

The protein belongs to the MsrA Met sulfoxide reductase family.

It carries out the reaction L-methionyl-[protein] + [thioredoxin]-disulfide + H2O = L-methionyl-(S)-S-oxide-[protein] + [thioredoxin]-dithiol. It catalyses the reaction [thioredoxin]-disulfide + L-methionine + H2O = L-methionine (S)-S-oxide + [thioredoxin]-dithiol. Its function is as follows. Has an important function as a repair enzyme for proteins that have been inactivated by oxidation. Catalyzes the reversible oxidation-reduction of methionine sulfoxide in proteins to methionine. This is Peptide methionine sulfoxide reductase MsrA from Bacillus pumilus (strain SAFR-032).